A 402-amino-acid chain; its full sequence is Probable peptidoglycan glycosyltransferase FtsW (402 aa).

At 1 to 24 the chain is on the cytoplasmic side; the sequence is MLYRLKLLLSGQNTKKERVRAKLE. Residues 25–45 form a helical membrane-spanning segment; that stretch reads IDISIVFVMLGLLIFGWVMVT. Residues 46–63 lie on the Periplasmic side of the membrane; that stretch reads SASMVVALDDYNNPYFYS. Residues 64-84 form a helical membrane-spanning segment; it reads IRQGFFAVIAIFLFLLALLVP. Residues 85–91 are Cytoplasmic-facing; that stretch reads TKNYEKN. Residues 92 to 112 traverse the membrane as a helical segment; that stretch reads YNAFFFIMLIVLVAVLVPGVG. Residues 113–121 lie on the Periplasmic side of the membrane; the sequence is KSVNGARRW. Residues 122-142 traverse the membrane as a helical segment; that stretch reads IPLIIINIQVAELAKLLAIIF. At 143–160 the chain is on the cytoplasmic side; the sequence is FSGYIAENLPKMTNFKEG. 2 consecutive transmembrane segments (helical) span residues 161–181 and 182–202; these read ILTP…QPDF and GSTV…GNKV. Arg203 is a topological domain (cytoplasmic). A helical transmembrane segment spans residues 204–224; sequence WYGLLIGAMLIMATMLVIISP. The Periplasmic segment spans residues 225–284; that stretch reads YRMHRITGFLHPWENANGSGYQLVQALIGFGRGGWFGDGLGNGVQKQFFLPEAHTDFITS. The chain crosses the membrane as a helical span at residues 285–305; sequence VIAEEIGVIGLMILLMVYLFI. Topologically, residues 306–324 are cytoplasmic; sequence VFRAMNIAKMAFELKRYYQ. The helical transmembrane segment at 325-345 threads the bilayer; sequence AFLSYGISFWIGFQVFVNIGV. The Periplasmic segment spans residues 346–357; sequence NTGLLPTKGLTL. The helical transmembrane segment at 358–378 threads the bilayer; that stretch reads PLISYGGSSLLIMCFTLGILV. Residues 379 to 402 are Cytoplasmic-facing; the sequence is RVDFENKLLADTINPKYIYKKVRK.

The protein belongs to the SEDS family. FtsW subfamily.

Its subcellular location is the cell inner membrane. It catalyses the reaction [GlcNAc-(1-&gt;4)-Mur2Ac(oyl-L-Ala-gamma-D-Glu-L-Lys-D-Ala-D-Ala)](n)-di-trans,octa-cis-undecaprenyl diphosphate + beta-D-GlcNAc-(1-&gt;4)-Mur2Ac(oyl-L-Ala-gamma-D-Glu-L-Lys-D-Ala-D-Ala)-di-trans,octa-cis-undecaprenyl diphosphate = [GlcNAc-(1-&gt;4)-Mur2Ac(oyl-L-Ala-gamma-D-Glu-L-Lys-D-Ala-D-Ala)](n+1)-di-trans,octa-cis-undecaprenyl diphosphate + di-trans,octa-cis-undecaprenyl diphosphate + H(+). The protein operates within cell wall biogenesis; peptidoglycan biosynthesis. Functionally, peptidoglycan polymerase that is essential for cell division. The chain is Probable peptidoglycan glycosyltransferase FtsW from Francisella salina.